The sequence spans 583 residues: Selenocysteine-specific elongation factor (583 aa).

Residues 5–203 (RVNVNVGVLG…LLKSQISIPT (199 aa)) form the tr-type G domain. The interval 14-21 (GHIDSGKT) is G1. Positions 19, 21, and 22 each coordinate GTP. Residue Thr-21 coordinates Mg(2+). The segment at 46–50 (GITLD) is G2. Mg(2+) contacts are provided by Thr-48 and Asp-78. The segment at 78–81 (DCPG) is G3. Positions 132–135 (NKID) are G4. GTP contacts are provided by Asp-135 and Lys-173. The tract at residues 171–173 (AAK) is G5. A disordered region spans residues 371-390 (MPTATEGDDEADPKAGHAPG). A Phosphoserine modification is found at Ser-524. The interval 528 to 562 (KKILTPTLKKRSRAGRGETTKPEEGTERPEPIQPV) is disordered. The residue at position 532 (Thr-532) is a Phosphothreonine. A Nuclear localization signal motif is present at residues 534–540 (TLKKRSR). The span at 542-557 (GRGETTKPEEGTERPE) shows a compositional bias: basic and acidic residues. Arg-543 carries the post-translational modification Omega-N-methylarginine.

Belongs to the TRAFAC class translation factor GTPase superfamily. Classic translation factor GTPase family. SelB subfamily. Requires Mg(2+) as cofactor. The cofactor is Mn(2+).

Its subcellular location is the cytoplasm. The protein resides in the nucleus. It catalyses the reaction GTP + H2O = GDP + phosphate + H(+). In terms of biological role, translation factor required for the incorporation of the rare amino acid selenocysteine encoded by UGA codons. Replaces the eRF1-eRF3-GTP ternary complex for the insertion of selenocysteine directed by the UGA codon. Insertion of selenocysteine at UGA codons is mediated by SECISBP2 and EEFSEC: SECISBP2 (1) specifically binds the SECIS sequence once the 80S ribosome encounters an in-frame UGA codon and (2) contacts the RPS27A/eS31 of the 40S ribosome before ribosome stalling. (3) GTP-bound EEFSEC then delivers selenocysteinyl-tRNA(Sec) to the 80S ribosome and adopts a preaccommodated state conformation. (4) After GTP hydrolysis, EEFSEC dissociates from the assembly, selenocysteinyl-tRNA(Sec) accommodates, and peptide bond synthesis and selenoprotein elongation occur. The chain is Selenocysteine-specific elongation factor (Eefsec) from Mus musculus (Mouse).